We begin with the raw amino-acid sequence, 853 residues long: Wolframin (853 aa).

Positions 139 to 179 (KQLERKMRRIYNLQRKRRRRDDDRSSSSSEGEQEPECEPLE) are disordered. The segment covering 144-157 (KMRRIYNLQRKRRR) has biased composition (basic residues). Acidic residues predominate over residues 169–179 (GEQEPECEPLE). Transmembrane regions (helical) follow at residues 238–258 (MIFH…NLIV), 259–279 (SIPN…ISWW), 285–305 (LPLV…CKML), 347–367 (LYFF…TDAW), 373–393 (LTII…YASS), 446–466 (FCLN…IMMA), 473–493 (GVYT…VCIA), 513–533 (IVLF…FVAI), 545–565 (WGST…LALN), and 572–592 (ITML…LPYM). Residues Asn694 and Asn769 are each glycosylated (N-linked (GlcNAc...) asparagine).

As to expression, detected in adult brain.

The protein localises to the membrane. It localises to the endoplasmic reticulum. The protein resides in the mitochondrion. Its function is as follows. Participates in the regulation of cellular Ca(2+) homeostasis, at least partly, by modulating the filling state of the endoplasmic reticulum Ca(2+) store. In neurons and glial cells, has a role in maintaining neuronal function and integrity during aging. The protein is Wolframin of Drosophila melanogaster (Fruit fly).